We begin with the raw amino-acid sequence, 72 residues long: uncharacterized protein (72 aa).

A helical membrane pass occupies residues 46 to 66 (AIFVFNLCFIPNLCVACIFNV).

The protein resides in the membrane. This is an uncharacterized protein from Saccharomyces cerevisiae (strain ATCC 204508 / S288c) (Baker's yeast).